A 123-amino-acid polypeptide reads, in one-letter code: NADH-quinone oxidoreductase subunit A (123 aa).

Helical transmembrane passes span 11–31 (YLPIAIFFGIAVLVSGLIMML), 68–88 (LVAILFIIFDLEITFLVPWAI), and 93–113 (IGKIGFFSMMFFLFVLIIGFI).

Belongs to the complex I subunit 3 family. NDH-1 is composed of 14 different subunits. Subunits NuoA, H, J, K, L, M, N constitute the membrane sector of the complex.

Its subcellular location is the cell inner membrane. The enzyme catalyses a quinone + NADH + 5 H(+)(in) = a quinol + NAD(+) + 4 H(+)(out). Its function is as follows. NDH-1 shuttles electrons from NADH, via FMN and iron-sulfur (Fe-S) centers, to quinones in the respiratory chain. The immediate electron acceptor for the enzyme in this species is believed to be ubiquinone. Couples the redox reaction to proton translocation (for every two electrons transferred, four hydrogen ions are translocated across the cytoplasmic membrane), and thus conserves the redox energy in a proton gradient. This Rickettsia typhi (strain ATCC VR-144 / Wilmington) protein is NADH-quinone oxidoreductase subunit A.